A 376-amino-acid polypeptide reads, in one-letter code: Copper-containing nitrite reductase (376 aa).

The segment at residues 1–33 is a signal peptide (tat-type signal); the sequence is MAEQMQISRRTILAGAALAGALAPVLATTSAWG. The residue at position 34 (glutamine 34) is a Pyrrolidone carboxylic acid. 2 Plastocyanin-like domains span residues 34 to 211 and 212 to 376; these read QGAV…YDKI and YYVG…PSGT. Positions 131, 136, 171, 172, 181, 186, and 342 each coordinate Cu cation.

Belongs to the multicopper oxidase family. As to quaternary structure, homotrimer. Requires Cu(2+) as cofactor. Cu(+) is required as a cofactor. FAD serves as cofactor. Predicted to be exported by the Tat system. The position of the signal peptide cleavage has been experimentally proven.

The protein localises to the periplasm. The catalysed reaction is nitric oxide + Fe(III)-[cytochrome c] + H2O = Fe(II)-[cytochrome c] + nitrite + 2 H(+). It functions in the pathway nitrogen metabolism; nitrate reduction (denitrification); dinitrogen from nitrate: step 2/4. The protein is Copper-containing nitrite reductase (nirK) of Alcaligenes faecalis.